A 1024-amino-acid polypeptide reads, in one-letter code: Translation initiation factor IF-2 (1024 aa).

The segment at 33–425 (SHMSSLEDDT…GRVKKTKTMK (393 aa)) is disordered. 4 stretches are compositionally biased toward basic and acidic residues: residues 43–62 (EARV…DTRV), 135–148 (TPED…ELKP), 167–198 (TPAK…KETS), and 223–263 (SKPD…KEVR). Over residues 316–325 (EATQAPTSPQ) the composition is skewed to polar residues. Residues 332 to 350 (KPADKGPARAQAHRPDTGR) are compositionally biased toward basic and acidic residues. Residues 365 to 375 (RSKKKEWKKKG) show a composition bias toward basic residues. The span at 394-406 (SVVEGKDLYEKGR) shows a compositional bias: basic and acidic residues. A compositionally biased stretch (basic residues) spans 407–423 (SGKKGRRKDGRVKKTKT). Residues 518-687 (SRPPVVTIMG…LLQSEVLELK (170 aa)) form the tr-type G domain. A G1 region spans residues 527-534 (GHVDHGKT). 527–534 (GHVDHGKT) lines the GTP pocket. The interval 552–556 (GITQH) is G2. A G3 region spans residues 573 to 576 (DTPG). GTP-binding positions include 573-577 (DTPGH) and 627-630 (NKMD). Positions 627–630 (NKMD) are G4. Residues 663 to 665 (SAK) are G5.

This sequence belongs to the TRAFAC class translation factor GTPase superfamily. Classic translation factor GTPase family. IF-2 subfamily.

The protein resides in the cytoplasm. Functionally, one of the essential components for the initiation of protein synthesis. Protects formylmethionyl-tRNA from spontaneous hydrolysis and promotes its binding to the 30S ribosomal subunits. Also involved in the hydrolysis of GTP during the formation of the 70S ribosomal complex. This chain is Translation initiation factor IF-2, found in Desulforapulum autotrophicum (strain ATCC 43914 / DSM 3382 / VKM B-1955 / HRM2) (Desulfobacterium autotrophicum).